A 4684-amino-acid chain; its full sequence is Plectin (4684 aa).

Positions 1–1470 (MVAGMLMPRD…SELTTLTSQY (1470 aa)) are globular 1. 2 positions are modified to phosphoserine: phenylalanine 20 and arginine 21. Valine 26 carries the post-translational modification Phosphotyrosine. Phosphoserine is present on glycine 42. Threonine 113 bears the Phosphothreonine mark. Residues serine 125 and serine 149 each carry the phosphoserine modification. The interval 144-179 (ELEEVSPETPVVPATTQRTLARPGPEPAPATDERDR) is disordered. Residues 175–400 (DERDRVQKKT…YVSSLYDAMP (226 aa)) are actin-binding. Calponin-homology (CH) domains lie at 179–282 (RVQK…LHFQ) and 295–400 (MTAK…DAMP). One copy of the Spectrin 1 repeat lies at 645–710 (LQSVQRRPEL…SIEEFRAKIE (66 aa)). The residue at position 720 (serine 720) is a Phosphoserine. 2 Spectrin repeats span residues 740–824 (KLLN…REDH) and 837–930 (LQTQ…AVVQ). The region spanning 941–998 (RGRLPLLAVCDYKQVEVTVHKGDECQLVGPAQPSHWKVLSSSGSEAAVPSVCFLVPPP) is the SH3 domain. The required for interaction with intermediate filament proteins stretch occupies residues 964-4574 (ECQLVGPAQP…VGAYSKYLTC (3611 aa)). Serine 1047 bears the Phosphoserine mark. The stretch at 1315-1415 (RERVAQLLER…QRFAKQYINA (101 aa)) is one Spectrin 4 repeat. Residue serine 1435 is modified to Phosphoserine. Positions 1469-2756 (QYIKFISETL…AHSEEVTASQ (1288 aa)) form a coiled coil. A central fibrous rod domain region spans residues 1471–2755 (IKFISETLRR…LAHSEEVTAS (1285 aa)). The tract at residues 1618–1650 (RAEEAEAQKRQAQEEAERLRRQVQDESQRKRQA) is disordered. At serine 1721 the chain carries Phosphoserine. Lysine 1725 carries the post-translational modification N6-acetyllysine. Serine 1732 carries the phosphoserine modification. Disordered regions lie at residues 1794-1836 (LAQA…KQRQ), 2105-2139 (EAARQRQLAAEEERRRREAEERVQKSLAAEEEAAR), and 2217-2307 (RGEA…MEKH). 3 stretches are compositionally biased toward basic and acidic residues: residues 1798-1836 (EAEKQKEEAEREARRRGKAEEQAVRQRELAEQELEKQRQ), 2105-2128 (EAARQRQLAAEEERRRREAEERVQ), and 2217-2258 (RGEA…KQSA). Over residues 2259 to 2272 (EEQAQARAQAQAAA) the composition is skewed to low complexity. A compositionally biased stretch (basic and acidic residues) spans 2273-2288 (EKLRKEAEQEAARRAQ). Serine 2631 carries the post-translational modification Phosphoserine. Lysine 2636 carries the N6-acetyllysine modification. Disordered stretches follow at residues 2668 to 2707 (REEQQRQQQQMEQERQRLVASMEEARRRQHEAEEGVRRKQ) and 2763 to 2784 (LPNGRDALDGPAAEAEPEHSFD). The segment covering 2679-2707 (EQERQRLVASMEEARRRQHEAEEGVRRKQ) has biased composition (basic and acidic residues). Residues 2756-4684 (QVAATKTLPN…SLGGPESAVA (1929 aa)) are globular 2. Phosphoserine occurs at positions 2782 and 2802. 5 Plectin repeats span residues 2826-2863 (RHYLQGRSSIAGLLLKATNEKLSVYAALQRQLLSPGTA), 2864-2901 (LILLEAQAASGFLLDPVRNRRLTVNEAVKEGVVGPELH), 2902-2939 (HKLLSAERAVTGYKDPYTGQQISLFQAMQKGLIVREHG), 2940-2977 (IRLLEAQIATGGVIDPVHSHRVPVDVAYRRGYFDEEMN), and 2981-3015 (ADPSDDTKGFFDPNTHENLTYLQLLERCVEDPETG). Position 2886 is a phosphothreonine (threonine 2886). At tyrosine 3033 the chain carries Phosphotyrosine. Serine 3036 carries the post-translational modification Phosphoserine. N6-acetyllysine is present on residues lysine 3053 and lysine 3091. 6 Plectin repeats span residues 3116-3153 (SLVPAAELLESRVIDRELYQQLQRGERSVRDVAEVDTV), 3154-3191 (RRALRGANVIAGVWLEEAGQKLSIYNALKKDLLPSDMA), 3192-3229 (VALLEAQAGTGHIIDPATSARLTVDEAVRAGLVGPEFH), 3230-3267 (EKLLSAEKAVTGYRDPYTGQSVSLFQALKKGLIPREQG), 3268-3305 (LRLLDAQLSTGGIVDPSKSHRVPLDVACARGCLDEETS), and 3306-3343 (RALSAPRADAKAYSDPSTGEPATYGELQQRCRPDQLTG). Residues 3310–3331 (APRADAKAYSDPSTGEPATYGE) form a disordered region. Tyrosine 3362 bears the Phosphotyrosine mark. Lysine 3420 is modified (N6-acetyllysine). Plectin repeat units lie at residues 3485–3522 (RTLLQGSGCLAGIYLEDTKEKVSIYEAMRRGLLRATTA), 3523–3560 (ALLLEAQAATGFLVDPVRNQRLYVHEAVKAGVVGPELH), 3561–3598 (EQLLSAEKAVTGYRDPYSGSTISLFQAMQKGLVLRQHG), 3599–3636 (IRLLEAQIATGGIIDPVHSHRVPVDVAYQRGYFSEEMN), and 3640–3674 (ADPSDDTKGFFDPNTHENLTYRQLLERCVEDPETG). Position 3580 is a phosphoserine (serine 3580). Position 3785 is a phosphothreonine (threonine 3785). Plectin repeat units lie at residues 3820 to 3857 (WCYLYGTGSVAGVYLPGSRQTLSIYQALKKGLLSAEVA), 3858 to 3895 (RLLLEAQAATGFLLDPVKGERLTVDEAVRKGLVGPELH), 3896 to 3933 (DRLLSAERAVTGYRDPYTEQTISLFQAMKKELIPTEEA), 3934 to 3971 (LRLLDAQLATGGIVDPRLGFHLPLEVAYQRGYLNKDTH), and 3975 to 4008 (SEPSEVRSYVDPSTDERLSYTQLLRRCRRDDGTG). Positions 3956–4293 (PLEVAYQRGY…ETGKEMSVYE (338 aa)) are required for interaction with type2 keratins, DES and VIM. Threonine 4030 is modified (phosphothreonine). Serine 4054 is modified (phosphoserine). Plectin repeat units lie at residues 4063–4100 (QKFLEGTSCIAGVFVDATKERLSVYQAMKKGIIRPGTA), 4101–4138 (FELLEAQAATGYVIDPIKGLKLTVEEAVRMGIVGPEFK), 4139–4176 (DKLLSAERAVTGYKDPYSGKLISLFQAMKKGLILKDHG), 4177–4214 (IRLLEAQIATGGIIDPEESHRLPVEVAYKRGLFDEEMN), 4218–4252 (TDPSDDTKGFFDPNTEENLTYLQLMERCITDPQTG), 4265–4305 (RKTS…HQTY), and 4319–4356 (TISSSDGVVKSMIIDRRSGRQYDIDDAIAKNLIDRSAL). A binding to intermediate filaments region spans residues 4250 to 4300 (QTGLCLLPLKEKKRERKTSSKSSVRKRRVVIVDPETGKEMSVYEAYRKGLI). 8 positions are modified to phosphoserine: serine 4382, serine 4384, serine 4385, serine 4386, serine 4389, serine 4390, serine 4391, and serine 4392. At tyrosine 4393 the chain carries Phosphotyrosine. Residues serine 4396, serine 4400, and serine 4406 each carry the phosphoserine modification. Plectin repeat units lie at residues 4408 to 4445 (SDPTEETGPVAGILDTETLEKVSITEAMHRNLVDNITG), 4446 to 4483 (QRLLEAQACTGGIIDPSTGERFPVTDAVNKGLVDKIMV), 4484 to 4521 (DRINLAQKAFCGFEDPRTKTKMSAAQALKKGWLYYEAG), 4522 to 4559 (QRFLEVQYLTGGLIEPDTPGRVPLDEALQRGTVDARTA), and 4560 to 4597 (QKLRDVGAYSKYLTCPKTKLKISYKDALDRSMVEEGTG). A Phosphothreonine modification is found at threonine 4411. Residues 4505-4574 (MSAAQALKKG…VGAYSKYLTC (70 aa)) are required for efficient interaction with KRT5 and KRT14 heterodimers. A Phosphothreonine; by CDK1 modification is found at threonine 4539. A phosphoserine mark is found at serine 4607 and serine 4613. Positions 4611-4678 (YYSPYSVSGS…ASGSSASLGG (68 aa)) are enriched in low complexity. Residues 4611 to 4684 (YYSPYSVSGS…SLGGPESAVA (74 aa)) are disordered. At tyrosine 4615 the chain carries Phosphotyrosine. Residues serine 4616, serine 4618, and serine 4622 each carry the phosphoserine modification. Position 4623 is a phosphothreonine (threonine 4623). The 4 X 4 AA tandem repeats of G-S-R-X stretch occupies residues 4625–4640 (GSRTGSRTGSRAGSRR). At serine 4626 the chain carries Phosphoserine. Residues arginine 4627 and arginine 4640 each carry the omega-N-methylarginine modification. A phosphoserine mark is found at serine 4642, serine 4672, and serine 4675.

This sequence belongs to the plakin or cytolinker family. In terms of assembly, homodimer or homotetramer. Interacts (via actin-binding domain) with SYNE3. Interacts (via calponin-homology (CH) 1 domain) with VIM (via rod region). Interacts (via N-terminus) with DST isoform 2 (via N-terminus). Interacts with FER. Interacts with TOR1A. Interacts with ANK3. Identified in complexes that contain VIM, EZR, AHNAK, BFSP1, BFSP2, ANK2, PLEC, PRX and spectrin. Interacts with COL17A1. Interacts with KRT14, heterodimers consisting of KRT8 and KRT18, heterodimers consisting of KRT5 and KRT14, heterodimers consisting of KRT14 and KRT15, and heterodimers consisting of KRT1 and KRT10. Interacts with DES and VIM. Post-translationally, phosphorylated by CDK1; regulates dissociation from intermediate filaments during mitosis. As to expression, widely expressed with highest levels in muscle, heart, placenta and spinal cord.

The protein localises to the cytoplasm. Its subcellular location is the cytoskeleton. The protein resides in the cell junction. It is found in the hemidesmosome. It localises to the cell projection. The protein localises to the podosome. Interlinks intermediate filaments with microtubules and microfilaments and anchors intermediate filaments to desmosomes or hemidesmosomes. Could also bind muscle proteins such as actin to membrane complexes in muscle. May be involved not only in the filaments network, but also in the regulation of their dynamics. Structural component of muscle. Isoform 9 plays a major role in the maintenance of myofiber integrity. This is Plectin (PLEC) from Homo sapiens (Human).